Here is a 556-residue protein sequence, read N- to C-terminus: DNA ligase B (556 aa).

K124 acts as the N6-AMP-lysine intermediate in catalysis.

The protein belongs to the NAD-dependent DNA ligase family. LigB subfamily.

It carries out the reaction NAD(+) + (deoxyribonucleotide)n-3'-hydroxyl + 5'-phospho-(deoxyribonucleotide)m = (deoxyribonucleotide)n+m + AMP + beta-nicotinamide D-nucleotide.. In terms of biological role, catalyzes the formation of phosphodiester linkages between 5'-phosphoryl and 3'-hydroxyl groups in double-stranded DNA using NAD as a coenzyme and as the energy source for the reaction. The polypeptide is DNA ligase B (Pseudomonas fluorescens (strain ATCC BAA-477 / NRRL B-23932 / Pf-5)).